Consider the following 103-residue polypeptide: Cytochrome c55X (103 aa).

The N-terminal stretch at 1–17 (MARLALLLVLLAGTAVA) is a signal peptide. 3 residues coordinate heme c: Cys-36, Cys-39, and His-40.

Binds 1 heme c group covalently per subunit.

It localises to the periplasm. Its function is as follows. Monoheme c-type cytochrome. The polypeptide is Cytochrome c55X (nirC) (Paracoccus denitrificans (strain Pd 1222)).